Reading from the N-terminus, the 55-residue chain is Large ribosomal subunit protein eL37 (55 aa).

Residues Cys20, Cys23, Cys35, and Cys38 each contribute to the Zn(2+) site. The C4-type zinc finger occupies 20-38 (CRRCGKNSYHKRHHRCSSC).

The protein belongs to the eukaryotic ribosomal protein eL37 family. Zn(2+) serves as cofactor.

Functionally, binds to the 23S rRNA. In Cenarchaeum symbiosum (strain A), this protein is Large ribosomal subunit protein eL37.